The following is a 521-amino-acid chain: uncharacterized protein (521 aa).

Residues 1–22 (MGFKLKGFGFLTLFASQAFLTA) form the signal peptide. Cys23 is lipidated: N-palmitoyl cysteine. Cys23 carries S-diacylglycerol cysteine lipidation.

It belongs to the MG067/MG068/MG395 family.

Its subcellular location is the cell membrane. This is an uncharacterized protein from Mycoplasma pneumoniae (strain ATCC 29342 / M129 / Subtype 1) (Mycoplasmoides pneumoniae).